We begin with the raw amino-acid sequence, 279 residues long: Diaminopimelate epimerase (279 aa).

3 residues coordinate substrate: Asn12, Gln45, and Asn65. The Proton donor role is filled by Cys74. Residues 75–76 (GN), Asn162, Asn195, and 213–214 (ER) each bind substrate. Cys222 functions as the Proton acceptor in the catalytic mechanism. 223-224 (GT) serves as a coordination point for substrate.

It belongs to the diaminopimelate epimerase family. In terms of assembly, homodimer.

Its subcellular location is the cytoplasm. The catalysed reaction is (2S,6S)-2,6-diaminopimelate = meso-2,6-diaminopimelate. It participates in amino-acid biosynthesis; L-lysine biosynthesis via DAP pathway; DL-2,6-diaminopimelate from LL-2,6-diaminopimelate: step 1/1. Functionally, catalyzes the stereoinversion of LL-2,6-diaminopimelate (L,L-DAP) to meso-diaminopimelate (meso-DAP), a precursor of L-lysine and an essential component of the bacterial peptidoglycan. This Shewanella woodyi (strain ATCC 51908 / MS32) protein is Diaminopimelate epimerase.